The following is a 251-amino-acid chain: HTH-type transcriptional regulator UlaR (251 aa).

Residues 3 to 58 enclose the HTH deoR-type domain; it reads EAQRHQILLEMLAQLGFVTVEKVVERLGISPATARRDINKLGESGKLKKVRNGAEA. A DNA-binding region (H-T-H motif) is located at residues 20–39; it reads VTVEKVVERLGISPATARRD.

The protein resides in the cytoplasm. Its function is as follows. Represses ulaG and the ulaABCDEF operon. This Shigella flexneri protein is HTH-type transcriptional regulator UlaR.